The following is a 31-amino-acid chain: Cycloviolacin-O23 (31 aa).

A cross-link (cyclopeptide (Gly-Asn)) is located at residues 1-31 (GLPTCGETCFGGTCNTPGCTCDSSWPICTHN). 3 disulfide bridges follow: C5-C19, C9-C21, and C14-C28.

Post-translationally, this is a cyclic peptide. As to expression, expressed in leaves but not in petals, petioles, roots and runners (at protein level).

Probably participates in a plant defense mechanism. The chain is Cycloviolacin-O23 from Viola odorata (Sweet violet).